A 488-amino-acid polypeptide reads, in one-letter code: Glutamyl-tRNA(Gln) amidotransferase subunit A (488 aa).

Active-site charge relay system residues include K77 and S152. The active-site Acyl-ester intermediate is the S176.

Belongs to the amidase family. GatA subfamily. Heterotrimer of A, B and C subunits.

It carries out the reaction L-glutamyl-tRNA(Gln) + L-glutamine + ATP + H2O = L-glutaminyl-tRNA(Gln) + L-glutamate + ADP + phosphate + H(+). Functionally, allows the formation of correctly charged Gln-tRNA(Gln) through the transamidation of misacylated Glu-tRNA(Gln) in organisms which lack glutaminyl-tRNA synthetase. The reaction takes place in the presence of glutamine and ATP through an activated gamma-phospho-Glu-tRNA(Gln). The chain is Glutamyl-tRNA(Gln) amidotransferase subunit A from Latilactobacillus sakei subsp. sakei (strain 23K) (Lactobacillus sakei subsp. sakei).